We begin with the raw amino-acid sequence, 139 residues long: Fluoroacetyl-CoA thioesterase (139 aa).

Residues 40–50 and Gly-69 contribute to the substrate site; that span reads FATGFMVGLME. Residues Thr-42 and Glu-50 contribute to the active site. CoA-binding positions include Gly-69 and 76-77; that span reads HT. His-76 is a catalytic residue. Residue Arg-120 coordinates substrate.

As to quaternary structure, homodimer.

It catalyses the reaction fluoroacetyl-CoA + H2O = fluoroacetate + CoA + H(+). In terms of biological role, hydrolyzes fluoroacetyl-CoA before it can react with citrate synthase, and thus confers fluoroacetate resistance. Cannot use acetyl-CoA as substrate. The sequence is that of Fluoroacetyl-CoA thioesterase (flK) from Streptantibioticus cattleyicolor (Streptomyces cattleya).